The sequence spans 464 residues: UDP-N-acetylmuramoylalanine--D-glutamate ligase (464 aa).

127 to 133 (GSNGKST) serves as a coordination point for ATP.

Belongs to the MurCDEF family.

It is found in the cytoplasm. The enzyme catalyses UDP-N-acetyl-alpha-D-muramoyl-L-alanine + D-glutamate + ATP = UDP-N-acetyl-alpha-D-muramoyl-L-alanyl-D-glutamate + ADP + phosphate + H(+). Its pathway is cell wall biogenesis; peptidoglycan biosynthesis. In terms of biological role, cell wall formation. Catalyzes the addition of glutamate to the nucleotide precursor UDP-N-acetylmuramoyl-L-alanine (UMA). The sequence is that of UDP-N-acetylmuramoylalanine--D-glutamate ligase from Roseobacter denitrificans (strain ATCC 33942 / OCh 114) (Erythrobacter sp. (strain OCh 114)).